The chain runs to 1422 residues: DNA-directed RNA polymerase subunit beta (1422 aa).

Positions 1392-1422 are disordered; it reads QAAREAAERDLGGGPLGAPRGAVASGEKSSA.

This sequence belongs to the RNA polymerase beta chain family. As to quaternary structure, the RNAP catalytic core consists of 2 alpha, 1 beta, 1 beta' and 1 omega subunit. When a sigma factor is associated with the core the holoenzyme is formed, which can initiate transcription.

The enzyme catalyses RNA(n) + a ribonucleoside 5'-triphosphate = RNA(n+1) + diphosphate. Its function is as follows. DNA-dependent RNA polymerase catalyzes the transcription of DNA into RNA using the four ribonucleoside triphosphates as substrates. This chain is DNA-directed RNA polymerase subunit beta, found in Anaeromyxobacter dehalogenans (strain 2CP-1 / ATCC BAA-258).